A 99-amino-acid chain; its full sequence is Keratinocyte differentiation-associated protein (99 aa).

A signal peptide spans 1 to 22 (MKIPVLPAVVLLSLLALHSAQG).

In terms of tissue distribution, highly expressed in skin, but not detectable in any other tissue examined. Expression restricted to cornified/stratified epithelia and not detected in non-cornified/stratified epithelia.

It localises to the secreted. May act as a soluble regulator of keratinocyte differentiation. May play an important role in embryonic skin morphogenesis. This chain is Keratinocyte differentiation-associated protein, found in Canis lupus familiaris (Dog).